The chain runs to 599 residues: DNA primase (599 aa).

The segment at 38 to 62 adopts a CHC2-type zinc-finger fold; it reads CPFHDEKTPSFTVSEDKQICHCFGC. The region spanning 260-341 is the Toprim domain; it reads DEIVLLEGFM…NVFVIQLPSG (82 aa). Residues E266, D310, and D312 each coordinate Mg(2+).

It belongs to the DnaG primase family. Monomer. Interacts with DnaB. It depends on Zn(2+) as a cofactor. Requires Mg(2+) as cofactor.

It carries out the reaction ssDNA + n NTP = ssDNA/pppN(pN)n-1 hybrid + (n-1) diphosphate.. In terms of biological role, RNA polymerase that catalyzes the synthesis of short RNA molecules used as primers for DNA polymerase during DNA replication. The sequence is that of DNA primase from Staphylococcus aureus (strain MRSA252).